A 1074-amino-acid chain; its full sequence is MEECEEPEEPISLGRQEYRRRRRPSQPMVDKSQQTEITEKRKAMASVQPPAPKATHSIGNIPGSKDNYSRKEYESLRLSSQLQKTLMKRKHVQDMTDKSLQTEPIVEEKVEVIFIDKTLKLEENTAGVGEIAPELPQSIPEVEIPTSRPTSHLIDRSQQTSCTGDWSLIYICPKEKVDKEQQTYFSELEIIIRSIPGSSMTKSKEETIPIAQEDPLVEINGSLEIEVLSPEELPDVMMSFTEGEISGELQALSNGEATVKGELFLTEEIPIQAPSPAEETSAAETATTTAKDVVDIQAPPADKLSSVEAPADISPTLVQGALSDKPSDQQYPQGTEMAPSELPVEDLDPFSEEVLEKVQALTTDSMLEDLGIAESTIAEETSGKVQHPLSEETSKEVPAEVHFPIAADFEESAILINEKFATDEVFEEYKPPIIEEVSADKATAEVQPPSAEDASEEVASSEVLPPSTEQGTVEDLTAEVLSTPTEEGPTEVPPQPTEEGPAEVPPPLSEEGPAEVPPAPAEEAPAEVLPPPAEEAPAEVPPPLTEEGPAEVPPPLTEEGPAEVPLAPAEEVPAEFLPPPAEEVPAEVPPPLTEEGPAEVPPPLTEEGPEEVPPLPAEEAPTKVPPSPAEKGSAEVSPPQTEEGPAEVPPPPAEEFPTEVPSSSAEEGSSEVPLPPTAERPEEAPPPATEEAPVEVLPPATEEAPVEVLPPATEEAPVEVQSPAAEEGLAEVPPPPTEESPTHDVPTEVQVPQAKESPGQVLPLSGESTAEEASAQVQPPSFEKAPLESLPLEEVEKIHLDNLPFEVQPLPTEDIAIGVPAESQALPADENPAREDTVETQPSSFEGAPIAENPIEAPLPASEADTGREDSAVHPSSLGPTDEAPAEIQILQTDDIPTEMSPVENQPLPAEEGFPEVVSEEEATAAEVRFPLSEGAPAQEATVEAQLTSVEESPKRASVDVQPLSPETPVEESPGVDLPLKTNEVTMQEFRVEKMPAEDSLPPSEQTPADQVLLKEHRLSQVADISEKELESTTLTSDKMSEGIDSVPEDVSGTKDDQISTFKIEGTIKIELKN.

The tract at residues 1–73 (MEECEEPEEP…SKDNYSRKEY (73 aa)) is disordered. Residues Ser-25, Ser-57, Ser-186, and Ser-275 each carry the phosphoserine modification. Disordered stretches follow at residues 272–294 (QAPSPAEETSAAETATTTAKDVV) and 317–343 (LVQGALSDKPSDQQYPQGTEMAPSELP). Positions 274 to 290 (PSPAEETSAAETATTTA) are enriched in low complexity. The residue at position 365 (Ser-365) is a Phosphoserine. Disordered regions lie at residues 437–789 (VSAD…PLES) and 818–982 (GVPA…PLKT). The span at 448–467 (PPSAEDASEEVASSEVLPPS) shows a compositional bias: low complexity. Residues 528 to 544 (VLPPPAEEAPAEVPPPL) show a composition bias toward pro residues. The segment covering 558–575 (EEGPAEVPLAPAEEVPAE) has biased composition (low complexity). 2 stretches are compositionally biased toward pro residues: residues 576-592 (FLPPPAEEVPAEVPPPL) and 673-688 (PLPPTAERPEEAPPPA). Residues 689-720 (TEEAPVEVLPPATEEAPVEVLPPATEEAPVEV) show a composition bias toward low complexity. Ser-1020 is modified (phosphoserine). The tract at residues 1026–1054 (SEKELESTTLTSDKMSEGIDSVPEDVSGT) is disordered.

In terms of assembly, interacts with CABYR. Interacts with ROPN1 and ROPN1L; the interaction increases upon spermatozoa capacitation conditions. Phosphorylated by PKA upon spermatozoa capacitation conditions. As to expression, expression is restricted to testis and epididymis, expressed by spermatozoa.

The protein resides in the cell projection. The protein localises to the cilium. It is found in the flagellum. May be involved in the later stages of fibrous sheath biogenesis and spermatozoa capacitation. Inhibits ROPN1 and ROPN1L SUMOylation. Binds calcium. This chain is Fibrous sheath CABYR-binding protein, found in Mus musculus (Mouse).